Reading from the N-terminus, the 518-residue chain is Putative transposase for insertion sequence IS408 (518 aa).

The region spanning L11 to L94 is the HTH IS408-type domain. The H-T-H motif DNA-binding region spans L23–A44. Residues Q140–T335 enclose the Integrase catalytic domain. A disordered region spans residues L496–H518. Positions R504 to H518 are enriched in basic and acidic residues.

It belongs to the transposase IS21/IS408/IS1162 family.

Required for the transposition of the insertion element. This Burkholderia multivorans (strain ATCC 17616 / 249) protein is Putative transposase for insertion sequence IS408.